We begin with the raw amino-acid sequence, 430 residues long: Adenylosuccinate synthetase (430 aa).

GTP is bound by residues G12–K18 and G40–T42. D13 acts as the Proton acceptor in catalysis. D13 and G40 together coordinate Mg(2+). Residues D13–K16, N38–H41, T128, R142, Q223, T238, and R302 contribute to the IMP site. The active-site Proton donor is H41. T298–R304 lines the substrate pocket. Residues R304, S330–D332, and S412–G414 each bind GTP.

The protein belongs to the adenylosuccinate synthetase family. In terms of assembly, homodimer. Requires Mg(2+) as cofactor.

It is found in the cytoplasm. It carries out the reaction IMP + L-aspartate + GTP = N(6)-(1,2-dicarboxyethyl)-AMP + GDP + phosphate + 2 H(+). The protein operates within purine metabolism; AMP biosynthesis via de novo pathway; AMP from IMP: step 1/2. Functionally, plays an important role in the de novo pathway of purine nucleotide biosynthesis. Catalyzes the first committed step in the biosynthesis of AMP from IMP. This is Adenylosuccinate synthetase from Streptococcus equi subsp. equi (strain 4047).